Consider the following 265-residue polypeptide: RWD domain-containing protein 3 (265 aa).

One can recognise an RWD domain in the interval 7-114; that stretch reads EEVAALSAIY…WTQQNLNNLI (108 aa).

The protein localises to the nucleus. It is found in the cytoplasm. Enhancer of SUMO conjugation. Increases SUMO conjugation to proteins by promoting the: binding of E1 and E2 enzymes, thioester linkage between SUMO and ube2i/ubc9 and transfer of SUMO to specific target proteins which include hif1a, pias, nfkbia, nr3c1 and top1. Has no effect on ubiquitination. This is RWD domain-containing protein 3 (rwdd3) from Xenopus tropicalis (Western clawed frog).